Reading from the N-terminus, the 337-residue chain is Inositol 2-dehydrogenase (337 aa).

This sequence belongs to the Gfo/Idh/MocA family. Homotetramer.

It catalyses the reaction myo-inositol + NAD(+) = scyllo-inosose + NADH + H(+). In terms of biological role, involved in the oxidation of myo-inositol (MI) to 2-keto-myo-inositol (2KMI or 2-inosose). In Klebsiella pneumoniae (strain 342), this protein is Inositol 2-dehydrogenase.